A 227-amino-acid chain; its full sequence is Cytochrome c oxidase subunit 2 (227 aa).

Topologically, residues 1 to 14 (MAYPFELGFQDATS) are mitochondrial intermembrane. A helical membrane pass occupies residues 15–45 (PIMEELLHFHDHTLMIVFLISSLVLYIISLM). Residues 46–59 (LTTKLTHTSTMDAQ) lie on the Mitochondrial matrix side of the membrane. The chain crosses the membrane as a helical span at residues 60–87 (EVETIWTILPAIILILIALPSLRILYMM). At 88-227 (DEINDPSLTV…HFENWSSSML (140 aa)) the chain is on the mitochondrial intermembrane side. The Cu cation site is built by His161, Cys196, Glu198, Cys200, His204, and Met207. A Mg(2+)-binding site is contributed by Glu198.

Belongs to the cytochrome c oxidase subunit 2 family. In terms of assembly, component of the cytochrome c oxidase (complex IV, CIV), a multisubunit enzyme composed of 14 subunits. The complex is composed of a catalytic core of 3 subunits MT-CO1, MT-CO2 and MT-CO3, encoded in the mitochondrial DNA, and 11 supernumerary subunits COX4I, COX5A, COX5B, COX6A, COX6B, COX6C, COX7A, COX7B, COX7C, COX8 and NDUFA4, which are encoded in the nuclear genome. The complex exists as a monomer or a dimer and forms supercomplexes (SCs) in the inner mitochondrial membrane with NADH-ubiquinone oxidoreductase (complex I, CI) and ubiquinol-cytochrome c oxidoreductase (cytochrome b-c1 complex, complex III, CIII), resulting in different assemblies (supercomplex SCI(1)III(2)IV(1) and megacomplex MCI(2)III(2)IV(2)). Found in a complex with TMEM177, COA6, COX18, COX20, SCO1 and SCO2. Interacts with TMEM177 in a COX20-dependent manner. Interacts with COX20. Interacts with COX16. Cu cation serves as cofactor.

The protein localises to the mitochondrion inner membrane. The catalysed reaction is 4 Fe(II)-[cytochrome c] + O2 + 8 H(+)(in) = 4 Fe(III)-[cytochrome c] + 2 H2O + 4 H(+)(out). Its function is as follows. Component of the cytochrome c oxidase, the last enzyme in the mitochondrial electron transport chain which drives oxidative phosphorylation. The respiratory chain contains 3 multisubunit complexes succinate dehydrogenase (complex II, CII), ubiquinol-cytochrome c oxidoreductase (cytochrome b-c1 complex, complex III, CIII) and cytochrome c oxidase (complex IV, CIV), that cooperate to transfer electrons derived from NADH and succinate to molecular oxygen, creating an electrochemical gradient over the inner membrane that drives transmembrane transport and the ATP synthase. Cytochrome c oxidase is the component of the respiratory chain that catalyzes the reduction of oxygen to water. Electrons originating from reduced cytochrome c in the intermembrane space (IMS) are transferred via the dinuclear copper A center (CU(A)) of subunit 2 and heme A of subunit 1 to the active site in subunit 1, a binuclear center (BNC) formed by heme A3 and copper B (CU(B)). The BNC reduces molecular oxygen to 2 water molecules using 4 electrons from cytochrome c in the IMS and 4 protons from the mitochondrial matrix. This is Cytochrome c oxidase subunit 2 (MT-CO2) from Tamias amoenus (Yellow-pine chipmunk).